A 319-amino-acid chain; its full sequence is tRNA uridine(34) hydroxylase (319 aa).

A Rhodanese domain is found at 124–218; the sequence is LDEDTVILDA…YGKNEETKGE (95 aa). The active-site Cysteine persulfide intermediate is the cysteine 178.

The protein belongs to the TrhO family.

The catalysed reaction is uridine(34) in tRNA + AH2 + O2 = 5-hydroxyuridine(34) in tRNA + A + H2O. Its function is as follows. Catalyzes oxygen-dependent 5-hydroxyuridine (ho5U) modification at position 34 in tRNAs. The polypeptide is tRNA uridine(34) hydroxylase (Listeria monocytogenes serotype 4b (strain CLIP80459)).